The sequence spans 329 residues: Quinone-oxidoreductase QR1, chloroplastic (329 aa).

The protein belongs to the zinc-containing alcohol dehydrogenase family. Quinone oxidoreductase subfamily.

The protein localises to the plastid. It localises to the chloroplast outer membrane. It catalyses the reaction 2 a quinone + NADPH + H(+) = 2 a 1,4-benzosemiquinone + NADP(+). Inhibited by dicumarol. Functionally, NADPH-dependent single-electron reducing quinone reductase. Involved in haustorium initiation in parasitic plants through redox cycling of exogenous haustorium-inducing factors. Can use 9,10-phenanthrenequinone (PAQ), 1,2-naphthoquinone, 5-hydroxy-1,4-naphthoquinone (juglone) and 2,6-dimethoxy-p-benzoquinone (DMBQ) as substrates, but has no activity with menadione, diamide, 2,3-dimethoxy-5-methyl-1,4-benzoquinone or 1,4-naphthoquinone. The chain is Quinone-oxidoreductase QR1, chloroplastic from Triphysaria versicolor (Yellow owl's clover).